Consider the following 122-residue polypeptide: Large ribosomal subunit protein uL14 (122 aa).

Belongs to the universal ribosomal protein uL14 family. Part of the 50S ribosomal subunit. Forms a cluster with proteins L3 and L19. In the 70S ribosome, L14 and L19 interact and together make contacts with the 16S rRNA in bridges B5 and B8.

Functionally, binds to 23S rRNA. Forms part of two intersubunit bridges in the 70S ribosome. This chain is Large ribosomal subunit protein uL14, found in Corynebacterium efficiens (strain DSM 44549 / YS-314 / AJ 12310 / JCM 11189 / NBRC 100395).